The chain runs to 390 residues: Altered inheritance of mitochondria protein 6 (390 aa).

The N-terminal stretch at M1 to G26 is a signal peptide.

This sequence belongs to the AIM6 family.

The protein is Altered inheritance of mitochondria protein 6 (AIM6) of Saccharomyces cerevisiae (strain RM11-1a) (Baker's yeast).